Reading from the N-terminus, the 63-residue chain is Large ribosomal subunit protein uL29 (63 aa).

This sequence belongs to the universal ribosomal protein uL29 family.

The chain is Large ribosomal subunit protein uL29 from Vibrio cholerae serotype O1 (strain ATCC 39541 / Classical Ogawa 395 / O395).